A 150-amino-acid polypeptide reads, in one-letter code: Large ribosomal subunit protein bL9 (150 aa).

This sequence belongs to the bacterial ribosomal protein bL9 family.

Its function is as follows. Binds to the 23S rRNA. This Lactococcus lactis subsp. cremoris (strain MG1363) protein is Large ribosomal subunit protein bL9.